Consider the following 465-residue polypeptide: ATP-dependent RNA helicase ddx19 (465 aa).

Residues 1–20 (MSEKETNTTSTENKEKEKQE) are compositionally biased toward basic and acidic residues. Residues 1-45 (MSEKETNTTSTENKEKEKQEQTNTNSTTESTNNQVDEEYERPGRS) form a disordered region. Residues 21–34 (QTNTNSTTESTNNQ) show a composition bias toward low complexity. Positions 70-98 (KTFEELGLKPELLKGVYAMGYNKPSKIQE) match the Q motif motif. In terms of domain architecture, Helicase ATP-binding spans 102-268 (PIIIQSPNNL…KKIVQDPYTS (167 aa)). 115–122 (SQSGTGKT) contacts ATP. Residues 215–218 (DEAD) carry the DEAD box motif. The 153-residue stretch at 297 to 449 (ILSDIYGFIS…ELKSSEIESL (153 aa)) folds into the Helicase C-terminal domain.

This sequence belongs to the DEAD box helicase family. DDX19/DBP5 subfamily.

The catalysed reaction is ATP + H2O = ADP + phosphate + H(+). ATP-binding RNA helicase required for normal differentiation and development. In Dictyostelium discoideum (Social amoeba), this protein is ATP-dependent RNA helicase ddx19 (helC).